The chain runs to 341 residues: tRNA N6-adenosine threonylcarbamoyltransferase (341 aa).

Residues H115 and H119 each contribute to the Fe cation site. Substrate contacts are provided by residues 137–141 (IVSGG), D170, G183, D187, and N276. D304 serves as a coordination point for Fe cation.

The protein belongs to the KAE1 / TsaD family. The cofactor is Fe(2+).

Its subcellular location is the cytoplasm. The catalysed reaction is L-threonylcarbamoyladenylate + adenosine(37) in tRNA = N(6)-L-threonylcarbamoyladenosine(37) in tRNA + AMP + H(+). Its function is as follows. Required for the formation of a threonylcarbamoyl group on adenosine at position 37 (t(6)A37) in tRNAs that read codons beginning with adenine. Is involved in the transfer of the threonylcarbamoyl moiety of threonylcarbamoyl-AMP (TC-AMP) to the N6 group of A37, together with TsaE and TsaB. TsaD likely plays a direct catalytic role in this reaction. This chain is tRNA N6-adenosine threonylcarbamoyltransferase, found in Staphylococcus aureus (strain bovine RF122 / ET3-1).